Reading from the N-terminus, the 440-residue chain is Trigger factor (440 aa).

A PPIase FKBP-type domain is found at 163–248 (GMVLTVDFSF…LKEIKKKELP (86 aa)).

Belongs to the FKBP-type PPIase family. Tig subfamily.

It is found in the cytoplasm. The enzyme catalyses [protein]-peptidylproline (omega=180) = [protein]-peptidylproline (omega=0). In terms of biological role, involved in protein export. Acts as a chaperone by maintaining the newly synthesized protein in an open conformation. Functions as a peptidyl-prolyl cis-trans isomerase. The sequence is that of Trigger factor from Trichlorobacter lovleyi (strain ATCC BAA-1151 / DSM 17278 / SZ) (Geobacter lovleyi).